The following is a 526-amino-acid chain: Methane monooxygenase component A alpha chain (526 aa).

Fe cation is bound by residues E114, E144, and H147. Residue C151 is part of the active site. 3 residues coordinate Fe cation: E209, E243, and H246.

The protein belongs to the TmoA/XamoA family. In terms of assembly, m.trichosporium has two forms of methane monooxygenase, a soluble and a membrane-bound type. The soluble type consists of four components (A to D): protein A, comprising three chains, in an alpha-2, beta-2, gamma-2 configuration, is a nonheme iron protein containing an unusual mu-hydroxo bridge structure at its active site and interacts with both oxygen and methane. It depends on Fe cation as a cofactor.

The catalysed reaction is methane + NADH + O2 + H(+) = methanol + NAD(+) + H2O. It carries out the reaction methane + NADPH + O2 + H(+) = methanol + NADP(+) + H2O. Responsible for the initial oxygenation of methane to methanol in methanotrophs. It also catalyzes the monohydroxylation of a variety of unactivated alkenes, alicyclic, aromatic and heterocyclic compounds. The protein is Methane monooxygenase component A alpha chain (mmoX) of Methylosinus trichosporium.